Here is a 312-residue protein sequence, read N- to C-terminus: Malate dehydrogenase (312 aa).

NAD(+)-binding positions include 7–12 (GAGNVG) and Asp-32. Substrate is bound by residues Arg-82 and Arg-88. Residues Asn-95 and 118 to 120 (VSN) contribute to the NAD(+) site. Substrate-binding residues include Asn-120 and Arg-151. Residue His-175 is the Proton acceptor of the active site.

The protein belongs to the LDH/MDH superfamily. MDH type 3 family.

The catalysed reaction is (S)-malate + NAD(+) = oxaloacetate + NADH + H(+). Functionally, catalyzes the reversible oxidation of malate to oxaloacetate. The chain is Malate dehydrogenase from Cytophaga hutchinsonii (strain ATCC 33406 / DSM 1761 / CIP 103989 / NBRC 15051 / NCIMB 9469 / D465).